Reading from the N-terminus, the 1020-residue chain is Probable beta-galactosidase B (1020 aa).

A signal peptide spans 1–22 (MLISKTVLSGLALGASFVGVSA). N-linked (GlcNAc...) asparagine glycosylation is present at N25. Position 90 (Y90) interacts with substrate. N-linked (GlcNAc...) asparagine glycosylation occurs at N111. Substrate-binding residues include N135, A136, and E137. Residue N172 is glycosylated (N-linked (GlcNAc...) asparagine). N195 contacts substrate. Catalysis depends on E196, which acts as the Proton donor. N210 and N251 each carry an N-linked (GlcNAc...) asparagine glycan. Y264 is a binding site for substrate. A disulfide bridge links C270 with C323. N271 is a glycosylation site (N-linked (GlcNAc...) asparagine). E307 serves as the catalytic Nucleophile. A substrate-binding site is contributed by Y372. N410, N455, N549, N596, N625, N702, N747, N785, N819, N880, and N919 each carry an N-linked (GlcNAc...) asparagine glycan.

The protein belongs to the glycosyl hydrolase 35 family.

The protein resides in the secreted. The enzyme catalyses Hydrolysis of terminal non-reducing beta-D-galactose residues in beta-D-galactosides.. Its function is as follows. Cleaves beta-linked terminal galactosyl residues from gangliosides, glycoproteins, and glycosaminoglycans. The chain is Probable beta-galactosidase B (lacB) from Aspergillus flavus (strain ATCC 200026 / FGSC A1120 / IAM 13836 / NRRL 3357 / JCM 12722 / SRRC 167).